The chain runs to 622 residues: Ferredoxin-fold anticodon-binding domain-containing protein 1 homolog (622 aa).

An FDX-ACB domain is found at 529–622 (LYPPCYVHDV…IQRQLHVSPR (94 aa)).

This is Ferredoxin-fold anticodon-binding domain-containing protein 1 homolog (Fdxacb1) from Mus musculus (Mouse).